The sequence spans 506 residues: GMP synthase [glutamine-hydrolyzing] (506 aa).

Residues 2-190 (SIVILDFGSQ…FLDICGVTRD (189 aa)) enclose the Glutamine amidotransferase type-1 domain. Cys79 serves as the catalytic Nucleophile. Catalysis depends on residues His165 and Glu167. The 191-residue stretch at 191–381 (WNAEHIVDEL…LGLPDHIRMR (191 aa)) folds into the GMPS ATP-PPase domain. Residue 219-225 (SGGVDSS) participates in ATP binding.

In terms of assembly, homodimer.

The enzyme catalyses XMP + L-glutamine + ATP + H2O = GMP + L-glutamate + AMP + diphosphate + 2 H(+). It functions in the pathway purine metabolism; GMP biosynthesis; GMP from XMP (L-Gln route): step 1/1. In terms of biological role, catalyzes the synthesis of GMP from XMP. The protein is GMP synthase [glutamine-hydrolyzing] (guaA) of Deinococcus radiodurans (strain ATCC 13939 / DSM 20539 / JCM 16871 / CCUG 27074 / LMG 4051 / NBRC 15346 / NCIMB 9279 / VKM B-1422 / R1).